A 561-amino-acid chain; its full sequence is Putative transport protein Ent638_1362 (561 aa).

5 helical membrane passes run 8–28, 32–52, 66–86, 94–114, and 158–178; these read LLNGNYILLLFVVLALGLCLG, LGSVQLGNSIGVLVVSLLLGQ, FMLFIFCVGVEAGPNFFSIFF, MLALVMVGSALIIALGLGKLF, and HLSLGYALTYLIGLVSLIVAA. 2 RCK C-terminal domains span residues 202–288 and 292–373; these read LDTD…SFRN and VFDR…RIGF. Helical transmembrane passes span 383–403, 406–426, 447–467, 475–495, and 540–560; these read LLAFCAFFIVGLMIGMITFQF, FSFGVGNAAGLLFAGIMLGFL, FGLMVFMAGVGLSAGSGIGHS, MLVAGLIVSLLPVVICFLFGA, and AIANVLLTLAGTLIIIIWPGL.

This sequence belongs to the AAE transporter (TC 2.A.81) family. YbjL subfamily.

The protein localises to the cell membrane. This chain is Putative transport protein Ent638_1362, found in Enterobacter sp. (strain 638).